Reading from the N-terminus, the 201-residue chain is Small ribosomal subunit protein uS4 (201 aa).

The interval 26 to 47 is disordered; that stretch reads LSKKNYPPGQHGNNRRRKTSEY. Residues 92–154 form the S4 RNA-binding domain; it reads ARLDNVVFRL…SKSLEVIADA (63 aa).

This sequence belongs to the universal ribosomal protein uS4 family. As to quaternary structure, part of the 30S ribosomal subunit. Contacts protein S5. The interaction surface between S4 and S5 is involved in control of translational fidelity.

One of the primary rRNA binding proteins, it binds directly to 16S rRNA where it nucleates assembly of the body of the 30S subunit. Functionally, with S5 and S12 plays an important role in translational accuracy. The polypeptide is Small ribosomal subunit protein uS4 (Porphyromonas gingivalis (strain ATCC 33277 / DSM 20709 / CIP 103683 / JCM 12257 / NCTC 11834 / 2561)).